Consider the following 621-residue polypeptide: Chaperone protein HscA homolog (621 aa).

The protein belongs to the heat shock protein 70 family.

Chaperone involved in the maturation of iron-sulfur cluster-containing proteins. Has a low intrinsic ATPase activity which is markedly stimulated by HscB. The sequence is that of Chaperone protein HscA homolog from Polynucleobacter asymbioticus (strain DSM 18221 / CIP 109841 / QLW-P1DMWA-1) (Polynucleobacter necessarius subsp. asymbioticus).